The following is a 979-amino-acid chain: DNA ligase 4 (979 aa).

Residues 1 to 39 (MDSDEIMPDEEHPNVPVGDEESDIDEKYPNRPRNHSPTL) are disordered. 10 residues coordinate ATP: glutamate 320, lysine 322, leucine 323, arginine 327, glutamate 389, phenylalanine 430, glutamate 490, lysine 495, lysine 512, and lysine 514. Residue lysine 322 is the N6-AMP-lysine intermediate of the active site. A Mg(2+)-binding site is contributed by glutamate 389. Glutamate 490 is a Mg(2+) binding site. 2 BRCT domains span residues 721–814 (PSGH…PDFL) and 867–965 (LQES…RFQP).

This sequence belongs to the ATP-dependent DNA ligase family. The cofactor is Mg(2+).

It is found in the nucleus. The catalysed reaction is ATP + (deoxyribonucleotide)n-3'-hydroxyl + 5'-phospho-(deoxyribonucleotide)m = (deoxyribonucleotide)n+m + AMP + diphosphate.. DNA ligase involved in DNA non-homologous end joining (NHEJ); required for double-strand break (DSB) repair. The protein is DNA ligase 4 (lig4) of Aspergillus fumigatus (strain ATCC MYA-4609 / CBS 101355 / FGSC A1100 / Af293) (Neosartorya fumigata).